The primary structure comprises 174 residues: MIYARANPELINPVTVPTEISEVVLVLANTIRRSPAFTGILKPVTIPLNTVPTDINAEDATSNSTIAPAKGSNTPGFAASSLYTCVLKNIGSNTAEIATETWNAVANDVITVSRGALHAIFGNNPCTGPVKSKLTPTNVTLGDDTPKSYDAPVSAIPPPATATTANATGVKPLE.

The tract at residues 137-174 is disordered; it reads TNVTLGDDTPKSYDAPVSAIPPPATATTANATGVKPLE.

This is an uncharacterized protein from Acanthamoeba polyphaga (Amoeba).